The chain runs to 1247 residues: Lon protease homolog 2, peroxisomal (1247 aa).

In terms of domain architecture, Lon N-terminal spans 22 to 402; the sequence is LPTYTLDSNL…LINEMILQLI (381 aa). 3 disordered regions span residues 76-103, 447-503, and 626-655; these read SGNS…ETYH, TKNR…DVDD, and DQSD…SPTS. Over residues 459 to 477 the composition is skewed to low complexity; that stretch reads PGPASSSGPSFSNGKSSPG. Residues 626–639 are compositionally biased toward basic and acidic residues; it reads DQSDKSQPIKDNSK. 721 to 728 contributes to the ATP binding site; the sequence is GPPGTGKT. Residues 989 to 1230 enclose the Lon proteolytic domain; it reads TVGVGVVHGL…YDIIKIVWNE (242 aa). Residues serine 1099 and lysine 1142 contribute to the active site.

It belongs to the peptidase S16 family.

It is found in the peroxisome matrix. It catalyses the reaction Hydrolysis of proteins in presence of ATP.. ATP-dependent serine protease that mediates the selective degradation of misfolded and unassembled polypeptides in the peroxisomal matrix. Necessary for type 2 peroxisome targeting signal (PTS2)-containing protein processing and facilitates peroxisome matrix protein import. The sequence is that of Lon protease homolog 2, peroxisomal from Candida dubliniensis (strain CD36 / ATCC MYA-646 / CBS 7987 / NCPF 3949 / NRRL Y-17841) (Yeast).